The chain runs to 944 residues: Leucine--tRNA ligase 2 (944 aa).

The 'HIGH' region signature appears at 36–46 (PYPNSPFHLGH). A 'KMSKS' region motif is present at residues 621–625 (KMSKS). Lys624 serves as a coordination point for ATP.

This sequence belongs to the class-I aminoacyl-tRNA synthetase family.

It is found in the cytoplasm. It carries out the reaction tRNA(Leu) + L-leucine + ATP = L-leucyl-tRNA(Leu) + AMP + diphosphate. The sequence is that of Leucine--tRNA ligase 2 from Sulfurisphaera tokodaii (strain DSM 16993 / JCM 10545 / NBRC 100140 / 7) (Sulfolobus tokodaii).